The chain runs to 463 residues: tRNA (guanine(10)-N(2))-methyltransferase TRMT11 (463 aa).

Position 2 is an N-acetylalanine (Ala2).

This sequence belongs to the class I-like SAM-binding methyltransferase superfamily. TRM11 methyltransferase family. Part of the heterodimeric TRMT11-TRM112 methyltransferase complex; this complex forms an active tRNA methyltransferase, where TRMT112 acts as an activator of the catalytic subunit TRMT11.

The protein localises to the cytoplasm. It catalyses the reaction guanosine(10) in tRNA + S-adenosyl-L-methionine = N(2)-methylguanosine(10) in tRNA + S-adenosyl-L-homocysteine + H(+). In terms of biological role, catalytic subunit of the TRMT11-TRM112 methyltransferase complex, that specifically mediates the S-adenosyl-L-methionine-dependent N(2)-methylation of guanosine nucleotide at position 10 (m2G10) in tRNAs. This is one of the major tRNA (guanine-N(2))-methyltransferases. The sequence is that of tRNA (guanine(10)-N(2))-methyltransferase TRMT11 from Rattus norvegicus (Rat).